A 204-amino-acid chain; its full sequence is Cardiotrophin-2 (204 aa).

An N-terminal signal peptide occupies residues 1-22; the sequence is MYCLLATPLCLLSLLLPPLSPA. N-linked (GlcNAc...) asparagine glycosylation occurs at asparagine 44.

It belongs to the IL-6 superfamily. As to quaternary structure, binds to tripartite CNTF receptor complex consisting of CNTF alpha chain, LIFR and IL6ST (in vitro). As to expression, not detected in adult tissues.

The protein localises to the secreted. Increases the platelet count associated with splenomegaly. May have an important role in neuronal precursor development and maturation. This is Cardiotrophin-2 (Ctf2) from Mus musculus (Mouse).